Reading from the N-terminus, the 688-residue chain is Alpha-1,4-glucan:maltose-1-phosphate maltosyltransferase (688 aa).

Residues K289, Q349, and D384 each coordinate alpha-maltose 1-phosphate. The active-site Nucleophile is the D420. N421 lines the alpha-maltose 1-phosphate pocket. Residue E449 is the Proton donor of the active site. Residue 560–561 (KY) coordinates alpha-maltose 1-phosphate.

The protein belongs to the glycosyl hydrolase 13 family. GlgE subfamily. In terms of assembly, homodimer.

It catalyses the reaction alpha-maltose 1-phosphate + [(1-&gt;4)-alpha-D-glucosyl](n) = [(1-&gt;4)-alpha-D-glucosyl](n+2) + phosphate. In terms of biological role, maltosyltransferase that uses maltose 1-phosphate (M1P) as the sugar donor to elongate linear or branched alpha-(1-&gt;4)-glucans. Is involved in a branched alpha-glucan biosynthetic pathway from trehalose, together with TreS, Mak and GlgB. The chain is Alpha-1,4-glucan:maltose-1-phosphate maltosyltransferase from Rhodospirillum rubrum (strain ATCC 11170 / ATH 1.1.1 / DSM 467 / LMG 4362 / NCIMB 8255 / S1).